The primary structure comprises 341 residues: Thromboxane A2 receptor (341 aa).

The Extracellular segment spans residues 1–29 (MWLNSTSLGACFRPVNITLQERRAIASPW). N-linked (GlcNAc...) asparagine glycans are attached at residues asparagine 4 and asparagine 16. A helical membrane pass occupies residues 30–52 (FAASFCALGLGSNLLALSVLAGA). At 53–65 (RPGAGPRSSFLAL) the chain is on the cytoplasmic side. The chain crosses the membrane as a helical span at residues 66–86 (LCGLVLTDFLGLLVTGAVVAS). The Extracellular segment spans residues 87-105 (QHAALLDWRATDPGCRLCH). Cysteine 104 and cysteine 181 form a disulfide bridge. A helical membrane pass occupies residues 106-127 (FMGAAMVFFGLCPLLLGAAMAA). At 128–147 (ERFVGITRPFSRPAATSRRA) the chain is on the cytoplasmic side. A helical membrane pass occupies residues 148 to 170 (WATVGLVWVGAGTLGLLPLLGLG). Over 171–191 (RYSVQYPGSWCFLTLGAERGD) the chain is Extracellular. The helical transmembrane segment at 192 to 217 (VAFGLMFALLGSVSVGLSLLLNTVSV) threads the bilayer. The Cytoplasmic portion of the chain corresponds to 218–244 (ATLCRVYHAREATQRPRDCEVEMMVQL). Residues 245 to 268 (VGIMVVATVCWMPLLVFILQTLLQ) traverse the membrane as a helical segment. At 269–287 (TLPVMSPSGQLLRTTERQL) the chain is on the extracellular side. Residues 288–309 (LIYLRVATWNQILDPWVYILFR) form a helical membrane-spanning segment. Topologically, residues 310–341 (RSVLRRLHPRFTSQLQAVSLHSPPTQAMLSGP) are cytoplasmic. Serine 328 bears the Phosphoserine mark.

This sequence belongs to the G-protein coupled receptor 1 family. Interacts with RPGRIP1L. Interacts with RACK1; the interaction regulates TBXA2R cell surface expression. As to expression, in the brain, expressed in all types of glial cells. In the kidney, expressed in the mesangial cells of the glomerulus, smooth muscle cells of the renal arterioles, and in transitional cell epithelium of renal pelvis.

The protein resides in the cell membrane. Its function is as follows. Receptor for thromboxane A2 (TXA2), a potent stimulator of platelet aggregation. The activity of this receptor is mediated by a G-protein that activates a phosphatidylinositol-calcium second messenger system. In the kidney, the binding of TXA2 to glomerular TP receptors causes intense vasoconstriction. Activates phospholipase C and adenylyl cyclase. The sequence is that of Thromboxane A2 receptor (Tbxa2r) from Rattus norvegicus (Rat).